A 247-amino-acid polypeptide reads, in one-letter code: Uridylate kinase (247 aa).

Residue 16-19 (KLSG) coordinates ATP. Residue G58 coordinates UMP. Residues G59 and R63 each contribute to the ATP site. UMP contacts are provided by residues D78 and 139-146 (TGNPFFTT). The ATP site is built by T166, Y172, and D175.

Belongs to the UMP kinase family. In terms of assembly, homohexamer.

The protein resides in the cytoplasm. The enzyme catalyses UMP + ATP = UDP + ADP. It participates in pyrimidine metabolism; CTP biosynthesis via de novo pathway; UDP from UMP (UMPK route): step 1/1. Its activity is regulated as follows. Inhibited by UTP. In terms of biological role, catalyzes the reversible phosphorylation of UMP to UDP. In Xylella fastidiosa (strain Temecula1 / ATCC 700964), this protein is Uridylate kinase.